The following is a 332-amino-acid chain: L-lactate dehydrogenase A chain (332 aa).

NAD(+) is bound by residues 29–57 (GMVGMASAVSILLKDLCDELALVDVMEDK) and R99. Residues R106, N138, and R169 each contribute to the substrate site. Residue N138 participates in NAD(+) binding. H193 functions as the Proton acceptor in the catalytic mechanism. T248 serves as a coordination point for substrate.

Belongs to the LDH/MDH superfamily. LDH family. As to quaternary structure, homotetramer.

Its subcellular location is the cytoplasm. It carries out the reaction (S)-lactate + NAD(+) = pyruvate + NADH + H(+). The protein operates within fermentation; pyruvate fermentation to lactate; (S)-lactate from pyruvate: step 1/1. Interconverts simultaneously and stereospecifically pyruvate and lactate with concomitant interconversion of NADH and NAD(+). The sequence is that of L-lactate dehydrogenase A chain (ldha) from Sphyraena argentea (Pacific barracuda).